Here is a 308-residue protein sequence, read N- to C-terminus: Acetaldehyde dehydrogenase (308 aa).

An NAD(+)-binding site is contributed by 25–28 (TGAI). The Acyl-thioester intermediate role is filled by Cys-139. Residue Asn-279 participates in NAD(+) binding.

Belongs to the acetaldehyde dehydrogenase family.

The catalysed reaction is acetaldehyde + NAD(+) + CoA = acetyl-CoA + NADH + H(+). This Streptomyces griseus subsp. griseus (strain JCM 4626 / CBS 651.72 / NBRC 13350 / KCC S-0626 / ISP 5235) protein is Acetaldehyde dehydrogenase.